We begin with the raw amino-acid sequence, 196 residues long: Protein GrpE (196 aa).

The interval methionine 1–arginine 40 is disordered.

Belongs to the GrpE family. Homodimer.

The protein localises to the cytoplasm. Functionally, participates actively in the response to hyperosmotic and heat shock by preventing the aggregation of stress-denatured proteins, in association with DnaK and GrpE. It is the nucleotide exchange factor for DnaK and may function as a thermosensor. Unfolded proteins bind initially to DnaJ; upon interaction with the DnaJ-bound protein, DnaK hydrolyzes its bound ATP, resulting in the formation of a stable complex. GrpE releases ADP from DnaK; ATP binding to DnaK triggers the release of the substrate protein, thus completing the reaction cycle. Several rounds of ATP-dependent interactions between DnaJ, DnaK and GrpE are required for fully efficient folding. This chain is Protein GrpE, found in Salmonella gallinarum (strain 287/91 / NCTC 13346).